A 481-amino-acid chain; its full sequence is U6 small nuclear RNA (adenine-(43)-N(6))-methyltransferase (481 aa).

Lysine 82, glycine 108, aspartate 131, threonine 164, and asparagine 184 together coordinate S-adenosyl-L-methionine.

It belongs to the methyltransferase superfamily. METTL16/RlmF family. Self-associates. Interacts with dlc-1; the interaction is direct, and is required for nuclear localization of mett-10.

It localises to the nucleus. The catalysed reaction is an adenosine in mRNA + S-adenosyl-L-methionine = an N(6)-methyladenosine in mRNA + S-adenosyl-L-homocysteine + H(+). The enzyme catalyses adenosine in U6 snRNA + S-adenosyl-L-methionine = N(6)-methyladenosine in U6 snRNA + S-adenosyl-L-homocysteine + H(+). Its function is as follows. RNA N6-methyltransferase that methylates adenosine residues at the N(6) position of a subset of RNAs and is involved in S-adenosyl-L-methionine homeostasis by regulating splicing of S-adenosylmethionine synthase transcripts (sams-3, sams-4 and sams-5). Able to N6-methylate a subset of mRNAs containing the 5'UACAGAAAC-3' nonamer sequence. Plays a key role in S-adenosyl-L-methionine homeostasis: under rich-diet conditions, catalyzes N6-methylation of S-adenosylmethionine synthase mRNAs (sams-3, sams-4 and sams-5), directly inhibiting splicing and protein production of S-adenosylmethionine synthase. In addition to mRNAs, also able to mediate N6-methylation of U6 small nuclear RNA (U6 snRNA). Required for gamete production, inhibiting germ cell proliferative fate and ensuring germ cell meiotic development. Also promotes progression of the mitotic cell cycle in those germ cells that continue to proliferate. Plays a role in the development of the vulva, somatic gonad and embryo. The polypeptide is U6 small nuclear RNA (adenine-(43)-N(6))-methyltransferase (Caenorhabditis briggsae).